We begin with the raw amino-acid sequence, 428 residues long: G2/mitotic-specific cyclin-B (428 aa).

This sequence belongs to the cyclin family. Cyclin AB subfamily. Interacts with the CDC2 protein kinase to form a serine/threonine kinase holoenzyme complex also known as maturation promoting factor (MPF). The cyclin subunit imparts substrate specificity to the complex.

Functionally, essential for the control of the cell cycle at the G2/M (mitosis) transition. This is G2/mitotic-specific cyclin-B from Spisula solidissima (Atlantic surf-clam).